The following is a 157-amino-acid chain: Large ribosomal subunit protein uL11 (157 aa).

It belongs to the universal ribosomal protein uL11 family.

In terms of biological role, this protein binds directly to 26S ribosomal RNA. The protein is Large ribosomal subunit protein uL11 (RPL12) of Chlamydomonas reinhardtii (Chlamydomonas smithii).